The sequence spans 246 residues: Proteasome subunit beta type-4 (246 aa).

The propeptide occupies 1-23 (MTTFSVPIDNGDSMKIAEEESQR). Threonine 24 acts as the Nucleophile in catalysis.

It belongs to the peptidase T1B family. In terms of assembly, component of the 20S core complex of the 26S proteasome. The 26S proteasome is composed of a core protease (CP), known as the 20S proteasome, capped at one or both ends by the 19S regulatory particle (RP/PA700). The 20S proteasome core is composed of 28 subunits that are arranged in four stacked rings, resulting in a barrel-shaped structure. The two end rings are each formed by seven alpha subunits, and the two central rings are each formed by seven beta subunits. The catalytic chamber with the active sites is on the inside of the barrel. In terms of tissue distribution, ubiquitous low levels, higher expression in siliques and flowers.

The protein localises to the cytoplasm. It is found in the nucleus. Its function is as follows. Non-catalytic component of the proteasome, a multicatalytic proteinase complex which is characterized by its ability to cleave peptides with Arg, Phe, Tyr, Leu, and Glu adjacent to the leaving group at neutral or slightly basic pH. The proteasome has an ATP-dependent proteolytic activity. This Arabidopsis thaliana (Mouse-ear cress) protein is Proteasome subunit beta type-4 (PBG1).